The chain runs to 75 residues: Translational regulator CsrA (75 aa).

The protein belongs to the CsrA/RsmA family. As to quaternary structure, homodimer; the beta-strands of each monomer intercalate to form a hydrophobic core, while the alpha-helices form wings that extend away from the core.

The protein localises to the cytoplasm. Functionally, a translational regulator that binds mRNA to regulate translation initiation and/or mRNA stability. Usually binds in the 5'-UTR at or near the Shine-Dalgarno sequence preventing ribosome-binding, thus repressing translation. Its main target seems to be the major flagellin gene, while its function is anatagonized by FliW. This is Translational regulator CsrA from Alkaliphilus metalliredigens (strain QYMF).